A 439-amino-acid chain; its full sequence is GTPase Der (439 aa).

2 consecutive EngA-type G domains span residues 4 to 168 and 177 to 352; these read PIVA…KDDE and INIA…DNYT. GTP contacts are provided by residues 10 to 17, 57 to 61, 120 to 123, 183 to 190, 230 to 234, and 295 to 298; these read GRPNVGKS, DTGGI, NKID, GKPNVGKS, DTAGL, and NKWD. Positions 353–437 constitute a KH-like domain; sequence KRVKTGVLND…GIKLEFRERK (85 aa).

This sequence belongs to the TRAFAC class TrmE-Era-EngA-EngB-Septin-like GTPase superfamily. EngA (Der) GTPase family. In terms of assembly, associates with the 50S ribosomal subunit.

Functionally, GTPase that plays an essential role in the late steps of ribosome biogenesis. The sequence is that of GTPase Der from Clostridium botulinum (strain Langeland / NCTC 10281 / Type F).